Consider the following 857-residue polypeptide: Protein ARG5,6, mitochondrial (857 aa).

The N-acetyltransferase domain occupies 341–492; that stretch reads INRNSLRDFG…FDSSSIGSSL (152 aa). The interval 509–532 is disordered; sequence GFHHSTVRRNTNPNPPLSEGKQTE. Residue Cys669 is part of the active site.

This sequence in the N-terminal section; belongs to the acetylglutamate kinase family. In the C-terminal section; belongs to the NAGSA dehydrogenase family.

The protein resides in the mitochondrion. It catalyses the reaction N-acetyl-L-glutamate 5-semialdehyde + phosphate + NADP(+) = N-acetyl-L-glutamyl 5-phosphate + NADPH + H(+). The enzyme catalyses N-acetyl-L-glutamate + ATP = N-acetyl-L-glutamyl 5-phosphate + ADP. It participates in amino-acid biosynthesis; L-arginine biosynthesis; N(2)-acetyl-L-ornithine from L-glutamate: step 2/4. The protein operates within amino-acid biosynthesis; L-arginine biosynthesis; N(2)-acetyl-L-ornithine from L-glutamate: step 3/4. This is Protein ARG5,6, mitochondrial (ARG5,6) from Candida albicans (Yeast).